A 257-amino-acid polypeptide reads, in one-letter code: Global transcriptional regulator CodY (257 aa).

Residues 1–155 (MSLLSKTREL…AATVIGMEIL (155 aa)) are GAF domain. 6 residues coordinate GTP: V22, F24, S43, R44, R45, and K47. L-isoleucine contacts are provided by R61, T96, and F98. Residues E153 and K158 each contribute to the GTP site. A DNA-binding region (H-T-H motif) is located at residues 203 to 222 (ASKVADRVGITRSVIVNALR).

It belongs to the CodY family. In terms of assembly, homodimer. Homotetramer. May form homodimers under conditions in which energy sources are sufficient (active state) and homotetramers under insufficient nutrient conditions (inactive state).

It localises to the cytoplasm. With respect to regulation, activity of CodY is modulated by interaction with two types of effectors: the branched-chain amino acids (BCAAs) leucine, isoleucine and valine, which are signals of the nutritional status of the cell, and GTP, which may signal the energetic status of the cell. DNA-binding global transcriptional regulator which is involved in the adaptive response to starvation and acts by directly or indirectly controlling the expression of numerous genes in response to nutrient availability. During rapid exponential growth, CodY is highly active and represses genes whose products allow adaptation to nutrient depletion. The polypeptide is Global transcriptional regulator CodY (Staphylococcus aureus (strain Mu3 / ATCC 700698)).